Consider the following 310-residue polypeptide: Ribosomal protein L11 methyltransferase (310 aa).

Residues T156, G179, D201, and N246 each coordinate S-adenosyl-L-methionine.

It belongs to the methyltransferase superfamily. PrmA family.

The protein localises to the cytoplasm. It catalyses the reaction L-lysyl-[protein] + 3 S-adenosyl-L-methionine = N(6),N(6),N(6)-trimethyl-L-lysyl-[protein] + 3 S-adenosyl-L-homocysteine + 3 H(+). In terms of biological role, methylates ribosomal protein L11. This Desulfatibacillum aliphaticivorans protein is Ribosomal protein L11 methyltransferase.